The following is a 130-amino-acid chain: uncharacterized protein (130 aa).

A helical membrane pass occupies residues 8-28 (PFILMIIVLGLFLVSIGGYYY).

Its subcellular location is the membrane. This is an uncharacterized protein from Bacillus anthracis.